The chain runs to 879 residues: Prostaglandin F2 receptor negative regulator (879 aa).

The first 21 residues, 1-21 (MGRPAPRPLLLALLSLAVCRG), serve as a signal peptide directing secretion. 2 Ig-like C2-type domains span residues 22–129 (RVVR…ATVQ) and 149–268 (PSSR…KAVE). The Extracellular segment spans residues 22-832 (RVVRVPAGTL…MDVLNAFKYP (811 aa)). 2 disulfides stabilise this stretch: Cys43-Cys119 and Cys169-Cys247. Asn44 is a glycosylation site (N-linked (GlcNAc...) asparagine). The Cell attachment site motif lies at 89-91 (RGD). Thr271 is subject to Phosphothreonine. Ig-like C2-type domains lie at 276–389 (PTAL…WHKV), 406–527 (PEYQ…RNSS), 544–662 (ASED…AWSP), and 688–813 (PIFN…AEIH). A disulfide bridge connects residues Cys299 and Cys373. N-linked (GlcNAc...) asparagine glycans are attached at residues Asn300, Asn383, and Asn413. The short motif at 424 to 427 (PTEL) is the Endoplasmic reticulum retention signal element. A disulfide bond links Cys429 and Cys515. N-linked (GlcNAc...) asparagine glycans are attached at residues Asn525, Asn600, Asn618, and Asn691. Cysteines 571 and 655 form a disulfide. The Cell attachment site signature appears at 703 to 705 (RGD). A disulfide bridge connects residues Cys711 and Cys793. A helical membrane pass occupies residues 833–853 (LLIGVGLSTVIGLLSCLIGYC). Residues 854-879 (SSHWCCKKEVRETRRERRRLMSMEMD) lie on the Cytoplasmic side of the membrane.

As to quaternary structure, interacts with CD9 and CD81. Part of a complex composed of CD9, CD81 and IGSF8. Also seems to interact with CD63, CD82 and CD151. As to expression, reproductive tissues, lung and heart.

Its subcellular location is the endoplasmic reticulum membrane. The protein localises to the golgi apparatus. It is found in the trans-Golgi network membrane. Functionally, inhibits the binding of prostaglandin F2-alpha (PGF2-alpha) to its specific FP receptor, by decreasing the receptor number rather than the affinity constant. Functional coupling with the prostaglandin F2-alpha receptor seems to occur. In myoblasts, associates with tetraspanins CD9 and CD81 to prevent myotube fusion during muscle regeneration. The sequence is that of Prostaglandin F2 receptor negative regulator (Ptgfrn) from Rattus norvegicus (Rat).